Consider the following 134-residue polypeptide: Cilia- and flagella-associated protein 144 (134 aa).

The disordered stretch occupies residues 76-95 (QGPRKKYPETQTENQEVGWD).

This sequence belongs to the CFAP144 family. As to quaternary structure, microtubule inner protein component of sperm flagellar doublet microtubules.

It localises to the cytoplasm. It is found in the cytoskeleton. Its subcellular location is the cilium axoneme. The protein resides in the flagellum axoneme. Its function is as follows. Microtubule inner protein (MIP) part of the dynein-decorated doublet microtubules (DMTs) in cilia axoneme, which is required for motile cilia beating. The sequence is that of Cilia- and flagella-associated protein 144 from Homo sapiens (Human).